Consider the following 232-residue polypeptide: Phosphatidylserine decarboxylase proenzyme (232 aa).

S190 acts as the Schiff-base intermediate with substrate; via pyruvic acid in catalysis. S190 is subject to Pyruvic acid (Ser); by autocatalysis.

This sequence belongs to the phosphatidylserine decarboxylase family. PSD-A subfamily. As to quaternary structure, heterodimer of a large membrane-associated beta subunit and a small pyruvoyl-containing alpha subunit. Pyruvate serves as cofactor. Is synthesized initially as an inactive proenzyme. Formation of the active enzyme involves a self-maturation process in which the active site pyruvoyl group is generated from an internal serine residue via an autocatalytic post-translational modification. Two non-identical subunits are generated from the proenzyme in this reaction, and the pyruvate is formed at the N-terminus of the alpha chain, which is derived from the carboxyl end of the proenzyme. The post-translation cleavage follows an unusual pathway, termed non-hydrolytic serinolysis, in which the side chain hydroxyl group of the serine supplies its oxygen atom to form the C-terminus of the beta chain, while the remainder of the serine residue undergoes an oxidative deamination to produce ammonia and the pyruvoyl prosthetic group on the alpha chain.

Its subcellular location is the cell membrane. It catalyses the reaction a 1,2-diacyl-sn-glycero-3-phospho-L-serine + H(+) = a 1,2-diacyl-sn-glycero-3-phosphoethanolamine + CO2. Its pathway is phospholipid metabolism; phosphatidylethanolamine biosynthesis; phosphatidylethanolamine from CDP-diacylglycerol: step 2/2. Catalyzes the formation of phosphatidylethanolamine (PtdEtn) from phosphatidylserine (PtdSer). The chain is Phosphatidylserine decarboxylase proenzyme from Afipia carboxidovorans (strain ATCC 49405 / DSM 1227 / KCTC 32145 / OM5) (Oligotropha carboxidovorans).